A 180-amino-acid chain; its full sequence is UPF0227 protein ECA1814 (180 aa).

The protein belongs to the UPF0227 family.

This chain is UPF0227 protein ECA1814, found in Pectobacterium atrosepticum (strain SCRI 1043 / ATCC BAA-672) (Erwinia carotovora subsp. atroseptica).